The following is a 542-amino-acid chain: Calcium/calmodulin-dependent protein kinase type II subunit beta (542 aa).

The region spanning 14–272 (YQLYEDIGKG…AHEALKHPWV (259 aa)) is the Protein kinase domain. The residue at position 17 (tyrosine 17) is a Phosphotyrosine. ATP-binding positions include 20–28 (IGKGAFSVV) and lysine 43. Aspartate 136 acts as the Proton acceptor in catalysis. Residues 283 to 292 (HRQETVECLK) are autoinhibitory domain. At threonine 287 the chain carries Phosphothreonine; by autocatalysis. Positions 291–301 (LKKFNARRKLK) are calmodulin-binding. Phosphothreonine; by autocatalysis occurs at positions 306 and 307. The disordered stretch occupies residues 349-407 (ADGVKPQTNSTKNSAAATSPKGTLPPAALEPQTTVIHNPVDGIKESSDSTHTTIEDEDT). Positions 354 to 369 (PQTNSTKNSAAATSPK) are enriched in polar residues. A phosphoserine mark is found at serine 367, serine 394, and serine 397. Residues threonine 400 and threonine 401 each carry the phosphothreonine modification.

This sequence belongs to the protein kinase superfamily. CAMK Ser/Thr protein kinase family. CaMK subfamily. In terms of assembly, CAMK2 is composed of 4 different chains: alpha (CAMK2A), beta (CAMK2B), gamma (CAMK2G), and delta (CAMK2D). The different isoforms assemble into homo- or heteromultimeric holoenzymes composed of 12 subunits with two hexameric rings stacked one on top of the other. Interacts with SYNGAP1, CAMK2N2 and MPDZ. Interacts with FOXO3. Interacts (when in a kinase inactive state not associated with calmodulin) with ARC; leading to target ARC to inactive synapses. Interacts with CAMK2N1; this interaction requires CAMK2B activation by Ca(2+). Post-translationally, autophosphorylation of Thr-287 following activation by Ca(2+)/calmodulin. Phosphorylation of Thr-287 locks the kinase into an activated state.

It localises to the cytoplasm. Its subcellular location is the cytoskeleton. The protein resides in the microtubule organizing center. It is found in the centrosome. The protein localises to the sarcoplasmic reticulum membrane. It localises to the synapse. The catalysed reaction is L-seryl-[protein] + ATP = O-phospho-L-seryl-[protein] + ADP + H(+). The enzyme catalyses L-threonyl-[protein] + ATP = O-phospho-L-threonyl-[protein] + ADP + H(+). Activated by Ca(2+)/calmodulin. Binding of calmodulin results in conformational change that relieves intrasteric autoinhibition and allows autophosphorylation of Thr-287 which turns the kinase in a constitutively active form and confers to the kinase a Ca(2+)-independent activity. Its function is as follows. Calcium/calmodulin-dependent protein kinase that functions autonomously after Ca(2+)/calmodulin-binding and autophosphorylation, and is involved in dendritic spine and synapse formation, neuronal plasticity and regulation of sarcoplasmic reticulum Ca(2+) transport in skeletal muscle. In neurons, plays an essential structural role in the reorganization of the actin cytoskeleton during plasticity by binding and bundling actin filaments in a kinase-independent manner. This structural function is required for correct targeting of CaMK2A, which acts downstream of NMDAR to promote dendritic spine and synapse formation and maintain synaptic plasticity which enables long-term potentiation (LTP) and hippocampus-dependent learning. In developing hippocampal neurons, promotes arborization of the dendritic tree and in mature neurons, promotes dendritic remodeling. Also regulates the migration of developing neurons. Participates in the modulation of skeletal muscle function in response to exercise. In slow-twitch muscles, is involved in regulation of sarcoplasmic reticulum (SR) Ca(2+) transport and in fast-twitch muscle participates in the control of Ca(2+) release from the SR through phosphorylation of triadin, a ryanodine receptor-coupling factor, and phospholamban (PLN/PLB), an endogenous inhibitor of SERCA2A/ATP2A2. In response to interferon-gamma (IFN-gamma) stimulation, catalyzes phosphorylation of STAT1, stimulating the JAK-STAT signaling pathway. Phosphorylates reticulophagy regulator RETREG1 at 'Ser-147' under endoplasmic reticulum stress conditions which enhances RETREG1 oligomerization and its membrane scission and reticulophagy activity. This is Calcium/calmodulin-dependent protein kinase type II subunit beta (CAMK2B) from Bos taurus (Bovine).